The chain runs to 228 residues: 5'(3')-deoxyribonucleotidase, mitochondrial (228 aa).

A mitochondrion-targeting transit peptide spans 1–31 (MIRLGGWCARRLCSAAVPAGRRGAAGGLGLA). Aspartate 41 functions as the Nucleophile in the catalytic mechanism. Residues aspartate 41 and aspartate 43 each coordinate Mg(2+). The active-site Proton donor is the aspartate 43. Residues aspartate 43, phenylalanine 49, phenylalanine 75, tryptophan 76, valine 77, tryptophan 96, threonine 130, and lysine 165 each contribute to the substrate site. Residue aspartate 176 coordinates Mg(2+).

It belongs to the 5'(3')-deoxyribonucleotidase family. Homodimer. Mg(2+) is required as a cofactor. In terms of tissue distribution, highly expressed in heart, brain and skeletal muscle. Detected at very low levels in kidney and pancreas.

Its subcellular location is the mitochondrion. Dephosphorylates specifically the 5' and 2'(3')-phosphates of uracil and thymine deoxyribonucleotides, and so protects mitochondrial DNA replication from excess dTTP. Has only marginal activity towards dIMP and dGMP. The protein is 5'(3')-deoxyribonucleotidase, mitochondrial (NT5M) of Homo sapiens (Human).